A 268-amino-acid chain; its full sequence is Undecaprenyl-diphosphatase (268 aa).

Transmembrane regions (helical) follow at residues 47–67, 83–103, 109–129, 144–164, 184–204, 218–238, and 246–266; these read FTVL…FAKL, FVIG…IAGK, LFNP…LMWV, FPLP…IPGV, AAEF…AYDF, TVAI…KAFL, and FTFF…ALAL.

It belongs to the UppP family.

It localises to the cell inner membrane. It carries out the reaction di-trans,octa-cis-undecaprenyl diphosphate + H2O = di-trans,octa-cis-undecaprenyl phosphate + phosphate + H(+). Its function is as follows. Catalyzes the dephosphorylation of undecaprenyl diphosphate (UPP). Confers resistance to bacitracin. In Nitrobacter winogradskyi (strain ATCC 25391 / DSM 10237 / CIP 104748 / NCIMB 11846 / Nb-255), this protein is Undecaprenyl-diphosphatase.